Reading from the N-terminus, the 293-residue chain is Glycine N-methyltransferase (293 aa).

Val-2 is modified (N-acetylvaline). Residues Ser-4 and Tyr-6 each coordinate (6S)-5-methyl-5,6,7,8-tetrahydrofolate. Ser-10 carries the phosphoserine modification. S-adenosyl-L-methionine-binding residues include Tyr-22, Trp-31, Tyr-34, and Arg-41. A Phosphotyrosine modification is found at Tyr-34. Lys-46 carries the N6-succinyllysine modification. S-adenosyl-L-methionine is bound by residues Ala-65, Asp-86–Ser-88, Asn-117–Trp-118, Leu-137, Leu-137–Ser-140, and Arg-176. N6-succinyllysine occurs at positions 191, 196, and 201. His-215 is a (6S)-5-methyl-5,6,7,8-tetrahydrofolate binding site. Tyr-221 contacts S-adenosyl-L-methionine. (6S)-5-methyl-5,6,7,8-tetrahydrofolate is bound at residue Arg-240.

This sequence belongs to the class I-like SAM-binding methyltransferase superfamily. Glycine N-methyltransferase family. Homotetramer.

Its subcellular location is the cytoplasm. It carries out the reaction glycine + S-adenosyl-L-methionine = sarcosine + S-adenosyl-L-homocysteine + H(+). Its activity is regulated as follows. Inhibited by 5-methyltetrahydrofolate monoglutamate and by 5-methyltetrahydrofolate pentaglutamate, inhibition is much more effective by the pentaglutamate form than by the monoglutamate form. Two molecules of 5-methyltetrahydrofolate are bound per tetramer. The binding sites are localized between subunits. Inhibitor binding may preclude movements of the polypeptide chain that are necessary for enzyme activity. In terms of biological role, catalyzes the methylation of glycine by using S-adenosylmethionine (AdoMet) to form N-methylglycine (sarcosine) with the concomitant production of S-adenosylhomocysteine (AdoHcy), a reaction regulated by the binding of 5-methyltetrahydrofolate. Plays an important role in the regulation of methyl group metabolism by regulating the ratio between S-adenosyl-L-methionine and S-adenosyl-L-homocysteine. The protein is Glycine N-methyltransferase (Gnmt) of Mus musculus (Mouse).